We begin with the raw amino-acid sequence, 113 residues long: MHEMALCESMIEIIEREAREQQFSRVRAVWLEIGALGHVDPEAMRFCFSAVAHGGIAADARLEILEMPGAAWCMDCAKTVTIAQRDAPCPDCGGHHLQITAGEELRIRELEVD.

Position 2 (H2) interacts with Ni(2+). The Zn(2+) site is built by C73, C76, C89, and C92.

This sequence belongs to the HypA/HybF family.

Its function is as follows. Involved in the maturation of [NiFe] hydrogenases. Required for nickel insertion into the metal center of the hydrogenase. This is Hydrogenase maturation factor HypA from Rhodopseudomonas palustris (strain TIE-1).